The chain runs to 385 residues: DNA replication and repair protein RecF (385 aa).

30-37 (GRNGQGKT) provides a ligand contact to ATP.

Belongs to the RecF family.

It localises to the cytoplasm. Its function is as follows. The RecF protein is involved in DNA metabolism; it is required for DNA replication and normal SOS inducibility. RecF binds preferentially to single-stranded, linear DNA. It also seems to bind ATP. This is DNA replication and repair protein RecF from Leifsonia xyli subsp. xyli (strain CTCB07).